Here is a 185-residue protein sequence, read N- to C-terminus: Peptidyl-tRNA hydrolase (185 aa).

Residue Tyr14 coordinates tRNA. The active-site Proton acceptor is the His19. TRNA is bound by residues Phe64, Asn66, and Asn112.

Belongs to the PTH family. Monomer.

The protein resides in the cytoplasm. It carries out the reaction an N-acyl-L-alpha-aminoacyl-tRNA + H2O = an N-acyl-L-amino acid + a tRNA + H(+). Its function is as follows. Hydrolyzes ribosome-free peptidyl-tRNAs (with 1 or more amino acids incorporated), which drop off the ribosome during protein synthesis, or as a result of ribosome stalling. Catalyzes the release of premature peptidyl moieties from peptidyl-tRNA molecules trapped in stalled 50S ribosomal subunits, and thus maintains levels of free tRNAs and 50S ribosomes. This Lactobacillus johnsonii (strain CNCM I-12250 / La1 / NCC 533) protein is Peptidyl-tRNA hydrolase.